We begin with the raw amino-acid sequence, 245 residues long: NAD(P)H-hydrate epimerase (245 aa).

The YjeF N-terminal domain occupies 16-224; the sequence is AAALDAELMA…HIADKYDLEV (209 aa). Residue 68–72 coordinates (6S)-NADPHX; it reads NNGGD. Residues asparagine 69 and aspartate 131 each coordinate K(+). (6S)-NADPHX-binding positions include 135–141 and aspartate 164; that span reads GFSFKPP. Residue serine 167 participates in K(+) binding.

It belongs to the NnrE/AIBP family. It depends on K(+) as a cofactor.

It localises to the cytoplasm. The protein localises to the mitochondrion. It carries out the reaction (6R)-NADHX = (6S)-NADHX. It catalyses the reaction (6R)-NADPHX = (6S)-NADPHX. In terms of biological role, catalyzes the epimerization of the S- and R-forms of NAD(P)HX, a damaged form of NAD(P)H that is a result of enzymatic or heat-dependent hydration. This is a prerequisite for the S-specific NAD(P)H-hydrate dehydratase to allow the repair of both epimers of NAD(P)HX. The chain is NAD(P)H-hydrate epimerase from Yarrowia lipolytica (strain CLIB 122 / E 150) (Yeast).